The chain runs to 217 residues: Large ribosomal subunit protein uL3 (217 aa).

It belongs to the universal ribosomal protein uL3 family. In terms of assembly, part of the 50S ribosomal subunit. Forms a cluster with proteins L14 and L19.

One of the primary rRNA binding proteins, it binds directly near the 3'-end of the 23S rRNA, where it nucleates assembly of the 50S subunit. This is Large ribosomal subunit protein uL3 from Mycolicibacterium smegmatis (strain ATCC 700084 / mc(2)155) (Mycobacterium smegmatis).